The primary structure comprises 521 residues: Caspase-10 (521 aa).

Positions 1 to 219 (MKSQGQHWYS…GEEELVSQTD (219 aa)) are excised as a propeptide. 2 DED domains span residues 19 to 97 (SFRE…HLNC) and 114 to 187 (LFRN…NIEK). Polar residues-rich tracts occupy residues 231-248 (SWQN…TNGA) and 259-268 (ASANTLNSET). The disordered stretch occupies residues 231–269 (SWQNKHAGSNGNRATNGAPSLVSRGMQGASANTLNSETS). Catalysis depends on residues His-358 and Cys-401.

It belongs to the peptidase C14A family. Heterotetramer that consists of two anti-parallel arranged heterodimers, each one formed by a 23/17 kDa (p23/17) (depending on the splicing events) and a 12 kDa (p12) subunit. Self-associates. Interacts with FADD and CASP8. Found in a Fas signaling complex consisting of FAS, FADD, CASP8 and CASP10. Interacts with RFFL and RNF34; negatively regulate CASP10 through proteasomal degradation. Interacts with RIOK3. In terms of processing, cleavage by granzyme B and autocatalytic activity generate the two active subunits. As to expression, detectable in most tissues. Lowest expression is seen in brain, kidney, prostate, testis and colon.

The enzyme catalyses Strict requirement for Asp at position P1 and has a preferred cleavage sequence of Leu-Gln-Thr-Asp-|-Gly.. Functionally, involved in the activation cascade of caspases responsible for apoptosis execution. Recruited to both Fas- and TNFR-1 receptors in a FADD dependent manner. May participate in the granzyme B apoptotic pathways. Cleaves and activates effector caspases CASP3, CASP4, CASP6, CASP7, CASP8 and CASP9. Hydrolyzes the small- molecule substrates, Tyr-Val-Ala-Asp-|-AMC and Asp-Glu-Val-Asp-|-AMC. Its function is as follows. Isoform 7 can enhance NF-kappaB activity but promotes only slight apoptosis. Isoform C is proteolytically inactive. The polypeptide is Caspase-10 (CASP10) (Homo sapiens (Human)).